A 324-amino-acid chain; its full sequence is MLKASLKSIASYIPEKILSNADLEKMVDTTDEWITRRTGIKERRIASENENTSDLGTKAALKAIKRANLKPEDIDAILVATLSPDYFTMPSTACKIASNLGLVNISAFDISAACSGFIYLLEQAKALVESGLKKNVLIIGAEKTSSIMDYNDRSICILFGDGAGAGVVSLDNENHILDVHTASNGNYGDLLMTQRSQKSNLCQTLSMQMKGNEVFKIAVNTLSNDVVEILAKNNILAQEIDLFIPHQANLRIIKAVQEKLNLSDEKCVITVQKYGNTSAASIPMAMNDAYEEGRLKKGDLILLDAFGGGFTWGSALLKFGGENF.

Catalysis depends on residues cysteine 114 and histidine 246. Residues 247–251 (QANLR) are ACP-binding. The active site involves asparagine 276.

Belongs to the thiolase-like superfamily. FabH family. As to quaternary structure, homodimer.

Its subcellular location is the cytoplasm. The catalysed reaction is malonyl-[ACP] + acetyl-CoA + H(+) = 3-oxobutanoyl-[ACP] + CO2 + CoA. Its pathway is lipid metabolism; fatty acid biosynthesis. Its function is as follows. Catalyzes the condensation reaction of fatty acid synthesis by the addition to an acyl acceptor of two carbons from malonyl-ACP. Catalyzes the first condensation reaction which initiates fatty acid synthesis and may therefore play a role in governing the total rate of fatty acid production. Possesses both acetoacetyl-ACP synthase and acetyl transacylase activities. Its substrate specificity determines the biosynthesis of branched-chain and/or straight-chain of fatty acids. The protein is Beta-ketoacyl-[acyl-carrier-protein] synthase III of Campylobacter jejuni subsp. jejuni serotype O:6 (strain 81116 / NCTC 11828).